We begin with the raw amino-acid sequence, 192 residues long: MPVMASYSTNEFKQGLKVMLDGNPCSIMENEYVKPGKGQAFNRVKLRNLKTGKVLEKTFKSGDSLEAADIVEVEMDYLYNDGELWNFMDPVTFEQIAADKVAMGDAAKWLKDDSNEKCSIMLFNGVPLNVSAPNFVVLKIVETDPGVRGDTSGGGGKPAKLETGAVVRVPLFVQQEDSVRVDTRTGEYLERA.

At Lys-37 the chain carries N6-(3,6-diaminohexanoyl)-5-hydroxylysine.

The protein belongs to the elongation factor P family. In terms of processing, may be beta-lysylated on the epsilon-amino group of Lys-37 by the combined action of EpmA and EpmB, and then hydroxylated on the C5 position of the same residue by EpmC (if this protein is present). Lysylation is critical for the stimulatory effect of EF-P on peptide-bond formation. The lysylation moiety may extend toward the peptidyltransferase center and stabilize the terminal 3-CCA end of the tRNA. Hydroxylation of the C5 position on Lys-37 may allow additional potential stabilizing hydrogen-bond interactions with the P-tRNA.

Its subcellular location is the cytoplasm. It functions in the pathway protein biosynthesis; polypeptide chain elongation. Functionally, involved in peptide bond synthesis. Alleviates ribosome stalling that occurs when 3 or more consecutive Pro residues or the sequence PPG is present in a protein, possibly by augmenting the peptidyl transferase activity of the ribosome. Modification of Lys-37 is required for alleviation. The polypeptide is Elongation factor P (Acinetobacter baylyi (strain ATCC 33305 / BD413 / ADP1)).